The chain runs to 217 residues: Probable GTP-binding protein EngB (217 aa).

The EngB-type G domain maps to 33–217 (GPTEIAFAGR…RAAIELAVAR (185 aa)). Residues 41–48 (GRSNVGKS), 68–72 (GRTQE), 95–98 (DMPG), 162–165 (TKTD), and 196–198 (TSS) each bind GTP. Positions 48 and 70 each coordinate Mg(2+).

It belongs to the TRAFAC class TrmE-Era-EngA-EngB-Septin-like GTPase superfamily. EngB GTPase family. The cofactor is Mg(2+).

Its function is as follows. Necessary for normal cell division and for the maintenance of normal septation. The polypeptide is Probable GTP-binding protein EngB (Sinorhizobium medicae (strain WSM419) (Ensifer medicae)).